The chain runs to 245 residues: tRNA pseudouridine synthase A (245 aa).

Asp52 acts as the Nucleophile in catalysis. Tyr111 contacts substrate.

This sequence belongs to the tRNA pseudouridine synthase TruA family. Homodimer.

It carries out the reaction uridine(38/39/40) in tRNA = pseudouridine(38/39/40) in tRNA. In terms of biological role, formation of pseudouridine at positions 38, 39 and 40 in the anticodon stem and loop of transfer RNAs. The chain is tRNA pseudouridine synthase A from Rickettsia typhi (strain ATCC VR-144 / Wilmington).